The following is a 299-amino-acid chain: UDP-3-O-acyl-N-acetylglucosamine deacetylase (299 aa).

Residues His-75, His-232, and Asp-236 each contribute to the Zn(2+) site. The Proton donor role is filled by His-259.

This sequence belongs to the LpxC family. Requires Zn(2+) as cofactor.

The enzyme catalyses a UDP-3-O-[(3R)-3-hydroxyacyl]-N-acetyl-alpha-D-glucosamine + H2O = a UDP-3-O-[(3R)-3-hydroxyacyl]-alpha-D-glucosamine + acetate. It functions in the pathway glycolipid biosynthesis; lipid IV(A) biosynthesis; lipid IV(A) from (3R)-3-hydroxytetradecanoyl-[acyl-carrier-protein] and UDP-N-acetyl-alpha-D-glucosamine: step 2/6. Functionally, catalyzes the hydrolysis of UDP-3-O-myristoyl-N-acetylglucosamine to form UDP-3-O-myristoylglucosamine and acetate, the committed step in lipid A biosynthesis. This Helicobacter hepaticus (strain ATCC 51449 / 3B1) protein is UDP-3-O-acyl-N-acetylglucosamine deacetylase.